A 161-amino-acid polypeptide reads, in one-letter code: V-type proton ATPase 16 kDa proteolipid subunit c 2 (161 aa).

At 1–15 (MSYDLETAERAAYAP) the chain is on the lumenal side. A helical membrane pass occupies residues 16-36 (FFGYMGAASAQIFTVLGAAYG). Residues 37 to 58 (TAKSAVGICSMGVMRPELIMKS) lie on the Cytoplasmic side of the membrane. Residues 59-79 (VIPVIMAGIIGIYGLVVAMVL) form a helical membrane-spanning segment. At 80-98 (KGKVTSASAGYDLNKGFAH) the chain is on the lumenal side. The helical transmembrane segment at 99-119 (LAAGLTCGLCGLGAGYAIGIV) threads the bilayer. Topologically, residues 120–137 (GDAGVRGTAQQPRLFVGM) are cytoplasmic. The helical transmembrane segment at 138 to 158 (ILILIFSEVLGLYGMIVALIL) threads the bilayer. Residues 159-161 (GTS) are Lumenal-facing.

Belongs to the V-ATPase proteolipid subunit family. In terms of assembly, V-ATPase is a heteromultimeric enzyme made up of two complexes: the ATP-hydrolytic V1 complex and the proton translocation V0 complex. The V1 complex consists of three catalytic AB heterodimers that form a heterohexamer, three peripheral stalks each consisting of EG heterodimers, one central rotor including subunits D and F, and the regulatory subunits C and H. The proton translocation complex V0 consists of the proton transport subunit a, a ring of proteolipid subunits c9c'', rotary subunit d, subunits e and f, and the accessory subunits vah-19/Ac45 and vah-20/PRR. As to expression, expressed in the H-shaped excretory cell, rectum, and a pair of cells posterior to the anus.

The protein resides in the membrane. In terms of biological role, proton-conducting pore forming subunit of the V0 complex of vacuolar(H+)-ATPase (V-ATPase), a multisubunit enzyme composed of a peripheral complex (V1) that hydrolyzes ATP and a membrane integral complex (V0) that translocates protons. V-ATPase is responsible for acidifying and maintaining the pH of intracellular compartments and in some cell types, is targeted to the plasma membrane, where it is responsible for acidifying the extracellular environment. Involved in necrotic cell death. Required along with other vacuolar ATPase components for the removal of protein aggregates which form in immature oocytes in the distal gonad. This removal occurs as the oocytes mature and move to the proximal gonad, is triggered by the introduction of sperm through mating and occurs before fertilization. The introduction of sperm triggers V-ATPase accumulation in proximal oocytes and induces lysosomal acidification which leads to engulfing of protein aggregates by lysosomes and subsequent clearance of the aggregates. Lysosomal acidification also leads to changes in mitochondrial morphology and function. Mitochondria in distal immature oocytes are fragmented, produce high levels of reactive oxygen species (ROS) and have high membrane potential, indicative of metabolic inactivity. In contrast, mitochondria in proximal mature oocytes are tubular with lower ROS levels and membrane potential, indicative of an active metabolic state required for aggregate mobilization before clearance. This is V-type proton ATPase 16 kDa proteolipid subunit c 2 from Caenorhabditis elegans.